We begin with the raw amino-acid sequence, 235 residues long: Thymidylate kinase (235 aa).

An ATP-binding site is contributed by 10–17; sequence GINGVEKS.

It belongs to the thymidylate kinase family.

It catalyses the reaction dTMP + ATP = dTDP + ADP. It participates in pyrimidine metabolism; dTTP biosynthesis. Its function is as follows. Catalyzes the conversion of dTMP to dTDP. In African swine fever virus (isolate Pig/Kenya/KEN-50/1950) (ASFV), this protein is Thymidylate kinase (TMK).